The following is a 445-amino-acid chain: rRNA methyltransferase 3B, mitochondrial (445 aa).

A mitochondrion-targeting transit peptide spans 1–37 (MATRIASMRFRCALFQSALTLGRNEVNIKRYVRRRRA). Disordered stretches follow at residues 52–90 (EGVI…SQPV) and 311–334 (HSTT…SDYG). Composition is skewed to polar residues over residues 54-70 (VISQ…NDIT), 78-90 (IENP…SQPV), and 311-324 (HSTT…NTTP). Residues glycine 387, isoleucine 411, and leucine 420 each contribute to the S-adenosyl-L-methionine site.

The protein belongs to the class IV-like SAM-binding methyltransferase superfamily. RNA methyltransferase TrmH family.

Its subcellular location is the mitochondrion. It carries out the reaction a uridine in rRNA + S-adenosyl-L-methionine = a 2'-O-methyluridine in rRNA + S-adenosyl-L-homocysteine + H(+). S-adenosyl-L-methionine-dependent 2'-O-ribose methyltransferase that catalyzes the formation of 2'-O-methylguanosine at position 1485 (Gm1485) in the mitochondrial large subunit ribosomal RNA (mtLSU rRNA), a conserved modification in the peptidyl transferase domain of the mtLSU rRNA. Also required for formation of 2'-O-methyluridine at position 1484 (Um1484) mediated by MRM2. In Danio rerio (Zebrafish), this protein is rRNA methyltransferase 3B, mitochondrial.